The primary structure comprises 1192 residues: Probable ATP-binding protein BrxC (1192 aa).

It belongs to the BrxC family.

BREX systems (bacteriophage exclusion) provide immunity against bacteriophage. A core protein of a type 1 BREX system. This system allows phage adsorption but prevents phage DNA replication, without degradation of the phage DNA. Methylation of bacterial DNA by PglX probably guides self/non-self discrimination. When the brxA-brxB-brxC-pglX and pglZ-brxL operons are transformed into a susceptible B.subtilis strain (BEST7003) they confer resistance to bacteriophages SPbeta, SP16, Zeta, phi3T and SP02 and partial protection to phages SP01 and SP82G (these include lytic and temperate phage). They do not protect against phages phi105, rho10 or rho14. Additionally confers a very slight reduction in efficiency of plasmid transformation. This is Probable ATP-binding protein BrxC from Bacillus cereus (strain H3081.97).